A 132-amino-acid chain; its full sequence is Secreted RxLR effector protein BLR08 (132 aa).

A signal peptide spans M1–S22. N25 carries an N-linked (GlcNAc...) asparagine glycan. Residues N36–D57 form a disordered region. Residues R37–R83 carry the RxLR-dEER motif. Residues F111–I131 traverse the membrane as a helical segment.

This sequence belongs to the RxLR effector family. In terms of assembly, interacts with host transcription factor NAC069.

It localises to the secreted. Its subcellular location is the host endoplasmic reticulum membrane. Its function is as follows. Secreted effector that inhibits stress-induced relocalization of the transcription factor NAC069 to the nucleus, thus affecting its broad role in abiotic and biotic stress responses. In Bremia lactucae (Lettuce downy mildew), this protein is Secreted RxLR effector protein BLR08.